Consider the following 361-residue polypeptide: Ribosomal RNA large subunit methyltransferase M (361 aa).

S-adenosyl-L-methionine is bound by residues Ser-187, 220–223 (CPGG), Asp-239, Asp-259, and Asp-276. The active-site Proton acceptor is Lys-305.

Belongs to the class I-like SAM-binding methyltransferase superfamily. RNA methyltransferase RlmE family. RlmM subfamily. As to quaternary structure, monomer.

It localises to the cytoplasm. It carries out the reaction cytidine(2498) in 23S rRNA + S-adenosyl-L-methionine = 2'-O-methylcytidine(2498) in 23S rRNA + S-adenosyl-L-homocysteine + H(+). In terms of biological role, catalyzes the 2'-O-methylation at nucleotide C2498 in 23S rRNA. The chain is Ribosomal RNA large subunit methyltransferase M from Shewanella oneidensis (strain ATCC 700550 / JCM 31522 / CIP 106686 / LMG 19005 / NCIMB 14063 / MR-1).